A 416-amino-acid polypeptide reads, in one-letter code: Probable glucan 1,3-beta-glucosidase A (416 aa).

The first 22 residues, 1 to 22, serve as a signal peptide directing secretion; sequence MIFKFSQKALVALYLVVGLAEA. The Proton donor role is filled by glutamate 211. Cystine bridges form between cysteine 291-cysteine 415 and cysteine 316-cysteine 342. The active-site Nucleophile is glutamate 308. Asparagine 344 carries N-linked (GlcNAc...) asparagine glycosylation.

The protein belongs to the glycosyl hydrolase 5 (cellulase A) family. In terms of assembly, monomer. Requires Mn(2+) as cofactor.

It localises to the secreted. The catalysed reaction is Successive hydrolysis of beta-D-glucose units from the non-reducing ends of (1-&gt;3)-beta-D-glucans, releasing alpha-glucose.. Beta-glucanases participate in the metabolism of beta-glucan, the main structural component of the cell wall. It could also function biosynthetically as a transglycosylase. The sequence is that of Probable glucan 1,3-beta-glucosidase A (exgA) from Aspergillus fumigatus (strain CBS 144.89 / FGSC A1163 / CEA10) (Neosartorya fumigata).